Reading from the N-terminus, the 260-residue chain is UPF0246 protein BPSL1241 (260 aa).

It belongs to the UPF0246 family.

In Burkholderia pseudomallei (strain K96243), this protein is UPF0246 protein BPSL1241.